A 194-amino-acid chain; its full sequence is Ras-related protein Rab-22A (194 aa).

GTP is bound at residue 12–20 (GDTGVGKSS). The short motif at 34-42 (INPTIGASF) is the Effector region element. GTP is bound by residues 60–64 (DTAGQ), 118–121 (NKCD), and 148–150 (SAK). The interval 170-194 (DANPPSGGKGFKLRRQPSEPQRSCC) is disordered. S-geranylgeranyl cysteine attachment occurs at residues Cys-193 and Cys-194.

The protein belongs to the small GTPase superfamily. Rab family. As to quaternary structure, interacts directly with ZFYVE20. Interacts (in its GTP-bound form) with RINL and RABGEF1. Binds EEA1.

It is found in the endosome membrane. Its subcellular location is the cell membrane. The protein resides in the early endosome. It localises to the late endosome. The protein localises to the cell projection. It is found in the ruffle. Its subcellular location is the cytoplasmic vesicle. The protein resides in the phagosome. It localises to the phagosome membrane. Plays a role in endocytosis and intracellular protein transport. Mediates trafficking of TF from early endosomes to recycling endosomes. Required for NGF-mediated endocytosis of NTRK1, and subsequent neurite outgrowth. Binds GTP and GDP and has low GTPase activity. Alternates between a GTP-bound active form and a GDP-bound inactive form. The polypeptide is Ras-related protein Rab-22A (RAB22A) (Canis lupus familiaris (Dog)).